The sequence spans 296 residues: MAMRQCAIYGKGGIGKSTTTQNLVAALAELGKKVMIVGCDPKADSTRLILHSKAQNTIMEMAAEAGTVEDLELEDVLKTGYGDIKCVESGGPEPGVGCAGRGVITAINFLEEKAAYEDDLDFVFYDVLGDVVCGGFAMPIRENKAQEIYVVCSGEMMAMYAANNISKGIVKYANSGSVRLGGLICNSRNTDREDELIMALADKLGSQMIHFVPRDNVVQRAEIRRMTVIEYDPAAKQADEYRTLAKKIVENKKLVIPTPISMDELEALLMEFGIMDEEDMTIVGKTAAEEPAFCSL.

10–17 (GKGGIGKS) serves as a coordination point for ATP. Cysteine 98 contacts [4Fe-4S] cluster. Residue arginine 101 is modified to ADP-ribosylarginine; by dinitrogenase reductase ADP-ribosyltransferase. Residue cysteine 133 coordinates [4Fe-4S] cluster.

This sequence belongs to the NifH/BchL/ChlL family. Homodimer. Requires [4Fe-4S] cluster as cofactor. Post-translationally, the reversible ADP-ribosylation of Arg-101 inactivates the nitrogenase reductase and regulates nitrogenase activity.

The catalysed reaction is N2 + 8 reduced [2Fe-2S]-[ferredoxin] + 16 ATP + 16 H2O = H2 + 8 oxidized [2Fe-2S]-[ferredoxin] + 2 NH4(+) + 16 ADP + 16 phosphate + 6 H(+). Functionally, the key enzymatic reactions in nitrogen fixation are catalyzed by the nitrogenase complex, which has 2 components: the iron protein and the molybdenum-iron protein. The polypeptide is Nitrogenase iron protein (nifH) (Alcaligenes faecalis).